Here is a 119-residue protein sequence, read N- to C-terminus: MEEPEMQLKGKKVTDKFTESVYVLANEPSVALYRLQEHVRRSLPELAQHKADMQRWEEQSQGAIYTVEYACSAVKNLVDSSVYFRSVEGLLKQAISIRDHMNASAQGHSPEEPPPPSSA.

S109 is subject to Phosphoserine.

This sequence belongs to the BORCS8 family. As to quaternary structure, component of the BLOC-one-related complex (BORC) which is composed of BLOC1S1, BLOC1S2, BORCS5, BORCS6, BORCS7, BORCS8, KXD1 and SNAPIN.

It localises to the lysosome membrane. Functionally, as part of the BLOC-one-related complex (BORC), it plays a role in the movement and localization of lysosomes at the cell periphery. Associated with the cytosolic face of lysosomes, BORC recruits ARL8B to the lysosomal membrane and couples lysosomes to microtubule plus-end-directed kinesin motors, driving lysosome movement toward the cell periphery. This is BLOC-1-related complex subunit 8 from Homo sapiens (Human).